A 351-amino-acid chain; its full sequence is Probable aldo-keto reductase 2 (351 aa).

The active-site Proton donor is the Tyr-67. His-134 provides a ligand contact to substrate. 213–223 (SPLGRGFFSAG) is an NADP(+) binding site. The disordered stretch occupies residues 317-351 (YASTDDVRGDRYPQAMANTTWQNSETPPLSSWKAQ). Residues 332–351 (MANTTWQNSETPPLSSWKAQ) show a composition bias toward polar residues.

It belongs to the aldo/keto reductase family.

This Oryza sativa subsp. japonica (Rice) protein is Probable aldo-keto reductase 2.